The sequence spans 348 residues: MAAVPDRERALDLALAQIDKQFGKGSVMRLGERPVVQTAVVPTGSIALDVALGVGGLPRGRVIEVYGPESSGKTTVALHAVANAQRAGGIAAFVDAEHALDPEYARALGVDTDALLVSQPDTGEQALEIADMLVRSGALDIIIIDSVAALVPRAEIEGEMGDSHVGLQARLMSQALRKMTGVLSNTGTTAIFINQLREKIGVMFGSPETTTGGRALKFYASVRLDVRRIESLKDGTDVVGNRTRVKVVKNKVAAPFKQAEFDIMYGKGISREGSLIDVGVEQAIIRKSGAWYTYEGDQLGQGKEKAREFLRENPDVAAEIEKKILEKLGVGAGAGDATGGPELPPVDF.

ATP is bound at residue 67–74; the sequence is GPESSGKT.

This sequence belongs to the RecA family.

It localises to the cytoplasm. Its function is as follows. Can catalyze the hydrolysis of ATP in the presence of single-stranded DNA, the ATP-dependent uptake of single-stranded DNA by duplex DNA, and the ATP-dependent hybridization of homologous single-stranded DNAs. It interacts with LexA causing its activation and leading to its autocatalytic cleavage. This Salinispora arenicola (strain CNS-205) protein is Protein RecA.